The chain runs to 309 residues: MTSRAPSPPTPPCPSPPALKSSPSPVPTATPASPPLKPLSNPLPPPPPTPRPSTSAGPSTPLPPPALRSSPSSALNASRGAPSTSPPPSSSPPSSPASTPPSRTPSPTPTAPASPVASTAMTPASPSVPPPPSAAPSSSAALSSAPPPSTAPLPRHEPRPPPPLPPPLQPPPGVRVPRSVAFPLPLARELPPLRLPPAPYLHPLLARLAPLRLRPPPDLPSPPLSPPLSPPLSPISPLHAPAPPPHPDPVLLPALSLAISRAAPDLLRLLSLLSPPSLFLLFTLLSIHFSPFPIFILLSLLLLLQFPRT.

2 stretches are compositionally biased toward pro residues: residues 1–17 (MTSR…PSPP) and 24–51 (SPVP…PTPR). Disordered stretches follow at residues 1–174 (MTSR…PPGV) and 216–240 (PPDL…PLHA). Positions 67-83 (LRSSPSSALNASRGAPS) are enriched in low complexity. The span at 84-112 (TSPPPSSSPPSSPASTPPSRTPSPTPTAP) shows a compositional bias: pro residues. Low complexity-rich tracts occupy residues 113–125 (ASPV…TPAS) and 135–144 (APSSSAALSS). The segment covering 160 to 174 (PPPPLPPPLQPPPGV) has biased composition (pro residues). The helical transmembrane segment at 278 to 298 (LFLLFTLLSIHFSPFPIFILL) threads the bilayer.

The protein resides in the host membrane. This is an uncharacterized protein from Vitis vinifera (Grape).